The chain runs to 499 residues: Ribose import ATP-binding protein RbsA 1 (499 aa).

2 ABC transporter domains span residues 5–240 (LEMR…GRSI) and 249–494 (TEPG…TAGS). 37–44 (GENGAGKS) contacts ATP.

This sequence belongs to the ABC transporter superfamily. Ribose importer (TC 3.A.1.2.1) family. In terms of assembly, the complex is composed of an ATP-binding protein (RbsA), two transmembrane proteins (RbsC) and a solute-binding protein (RbsB).

Its subcellular location is the cell membrane. It carries out the reaction D-ribose(out) + ATP + H2O = D-ribose(in) + ADP + phosphate + H(+). Functionally, part of the ABC transporter complex RbsABC involved in ribose import. Responsible for energy coupling to the transport system. This is Ribose import ATP-binding protein RbsA 1 from Rubrobacter xylanophilus (strain DSM 9941 / JCM 11954 / NBRC 16129 / PRD-1).